Reading from the N-terminus, the 601-residue chain is Elongation factor 4 (601 aa).

Residues 6–188 (KNIRNFSIIA…QIIKKIPAPD (183 aa)) enclose the tr-type G domain. Residues 18 to 23 (DHGKST) and 135 to 138 (NKID) each bind GTP.

Belongs to the TRAFAC class translation factor GTPase superfamily. Classic translation factor GTPase family. LepA subfamily.

It localises to the cell membrane. It catalyses the reaction GTP + H2O = GDP + phosphate + H(+). Functionally, required for accurate and efficient protein synthesis under certain stress conditions. May act as a fidelity factor of the translation reaction, by catalyzing a one-codon backward translocation of tRNAs on improperly translocated ribosomes. Back-translocation proceeds from a post-translocation (POST) complex to a pre-translocation (PRE) complex, thus giving elongation factor G a second chance to translocate the tRNAs correctly. Binds to ribosomes in a GTP-dependent manner. The polypeptide is Elongation factor 4 (Buchnera aphidicola subsp. Schizaphis graminum (strain Sg)).